A 150-amino-acid chain; its full sequence is Ribosome-binding factor A (150 aa).

The disordered stretch occupies residues 119–150 (VAERAKSAQPAGEPDPYRFDGAAAADDDEPAT).

It belongs to the RbfA family. As to quaternary structure, monomer. Binds 30S ribosomal subunits, but not 50S ribosomal subunits or 70S ribosomes.

The protein localises to the cytoplasm. One of several proteins that assist in the late maturation steps of the functional core of the 30S ribosomal subunit. Associates with free 30S ribosomal subunits (but not with 30S subunits that are part of 70S ribosomes or polysomes). Required for efficient processing of 16S rRNA. May interact with the 5'-terminal helix region of 16S rRNA. The protein is Ribosome-binding factor A of Acidothermus cellulolyticus (strain ATCC 43068 / DSM 8971 / 11B).